The primary structure comprises 224 residues: Putative N-acetylmannosamine-6-phosphate 2-epimerase (224 aa).

It belongs to the NanE family.

The catalysed reaction is an N-acyl-D-glucosamine 6-phosphate = an N-acyl-D-mannosamine 6-phosphate. It participates in amino-sugar metabolism; N-acetylneuraminate degradation; D-fructose 6-phosphate from N-acetylneuraminate: step 3/5. Converts N-acetylmannosamine-6-phosphate (ManNAc-6-P) to N-acetylglucosamine-6-phosphate (GlcNAc-6-P). This chain is Putative N-acetylmannosamine-6-phosphate 2-epimerase, found in Staphylococcus carnosus (strain TM300).